Reading from the N-terminus, the 105-residue chain is Large ribosomal subunit protein eL36 (105 aa).

Lys-62 carries the N6-acetyllysine modification.

It belongs to the eukaryotic ribosomal protein eL36 family. Component of the large ribosomal subunit.

Its subcellular location is the cytoplasm. The protein resides in the cytosol. In terms of biological role, component of the large ribosomal subunit. The ribosome is a large ribonucleoprotein complex responsible for the synthesis of proteins in the cell. The protein is Large ribosomal subunit protein eL36 (RPL36) of Homo sapiens (Human).